The primary structure comprises 298 residues: GPN-loop GTPase QQT1 (298 aa).

12-17 is a binding site for GTP; the sequence is GSGKTT. A Gly-Pro-Asn (GPN)-loop; involved in dimer interface motif is present at residues 69–71; the sequence is GPN. 173-176 contacts GTP; it reads SKID.

The protein belongs to the GPN-loop GTPase family. Heterodimer with QQT2. As to expression, expressed in vascular tissues, root tips, apical and root meristematic regions, and floral primordia.

It localises to the cytoplasm. It is found in the nucleus. The protein localises to the cytoskeleton. Its subcellular location is the spindle. The protein resides in the phragmoplast. Small GTPase that is essential for the correct formation of the tangential divisions in early embryos. Associates with microtubule during mitosis and may function in the positioning of the division plane. May participate in the patterning of the early embryo at the octant-dermatogen transition. Is crucial for normal development of the plant. In Arabidopsis thaliana (Mouse-ear cress), this protein is GPN-loop GTPase QQT1.